A 272-amino-acid polypeptide reads, in one-letter code: Putative phosphoenolpyruvate synthase regulatory protein (272 aa).

152 to 159 contributes to the ADP binding site; it reads GVSRCGKT.

This sequence belongs to the pyruvate, phosphate/water dikinase regulatory protein family. PSRP subfamily.

It catalyses the reaction [pyruvate, water dikinase] + ADP = [pyruvate, water dikinase]-phosphate + AMP + H(+). The enzyme catalyses [pyruvate, water dikinase]-phosphate + phosphate + H(+) = [pyruvate, water dikinase] + diphosphate. Its function is as follows. Bifunctional serine/threonine kinase and phosphorylase involved in the regulation of the phosphoenolpyruvate synthase (PEPS) by catalyzing its phosphorylation/dephosphorylation. The protein is Putative phosphoenolpyruvate synthase regulatory protein of Pseudomonas putida (strain GB-1).